We begin with the raw amino-acid sequence, 69 residues long: Ribosome modulation factor (69 aa).

The protein belongs to the ribosome modulation factor family.

Its subcellular location is the cytoplasm. During stationary phase, converts 70S ribosomes to an inactive dimeric form (100S ribosomes). This Chromohalobacter salexigens (strain ATCC BAA-138 / DSM 3043 / CIP 106854 / NCIMB 13768 / 1H11) protein is Ribosome modulation factor.